A 262-amino-acid chain; its full sequence is 5'-nucleotidase SurE (262 aa).

A divalent metal cation is bound by residues aspartate 8, aspartate 9, serine 39, and asparagine 91.

The protein belongs to the SurE nucleotidase family. Requires a divalent metal cation as cofactor.

It is found in the cytoplasm. The enzyme catalyses a ribonucleoside 5'-phosphate + H2O = a ribonucleoside + phosphate. Nucleotidase that shows phosphatase activity on nucleoside 5'-monophosphates. This is 5'-nucleotidase SurE from Geobacter sulfurreducens (strain ATCC 51573 / DSM 12127 / PCA).